A 610-amino-acid chain; its full sequence is Elongation factor 4 (610 aa).

Positions 11–193 (EKIRNFSIIA…QIVEKVPAPT (183 aa)) constitute a tr-type G domain. Residues 23–28 (DHGKST) and 140–143 (NKID) each bind GTP.

It belongs to the TRAFAC class translation factor GTPase superfamily. Classic translation factor GTPase family. LepA subfamily.

The protein localises to the cell membrane. It carries out the reaction GTP + H2O = GDP + phosphate + H(+). Its function is as follows. Required for accurate and efficient protein synthesis under certain stress conditions. May act as a fidelity factor of the translation reaction, by catalyzing a one-codon backward translocation of tRNAs on improperly translocated ribosomes. Back-translocation proceeds from a post-translocation (POST) complex to a pre-translocation (PRE) complex, thus giving elongation factor G a second chance to translocate the tRNAs correctly. Binds to ribosomes in a GTP-dependent manner. The sequence is that of Elongation factor 4 from Streptococcus suis (strain 98HAH33).